The following is a 597-amino-acid chain: MSDYYGGAHTTVRLIDLATRMPRVLADTPVIVRGAMTGLLARPNSKASIGTVFQDRAARYGDRVFLKFGDQQLTYRDANATANRYAAVLAARGVGPGDVVGIMLRNSPSTVLAMLATVKCGAIAGMLNYHQRGEVLAHSLGLLDAKVLIAESDLVSAVAECGASRGRVAGDVLTVEDVERFATTAPATNPASASAVQAKDTAFYIFTSGTTGFPKASVMTHHRWLRALAVFGGMGLRLKGSDTLYSCLPLYHNNALTVAVSSVINSGATLALGKSFSASRFWDEVIANRATAFVYIGEICRYLLNQPAKPTDRAHQVRVICGNGLRPEIWDEFTTRFGVARVCEFYAASEGNSAFINIFNVPRTAGVSPMPLAFVEYDLDTGDPLRDASGRVRRVPDGEPGLLLSRVNRLQPFDGYTDPVASEKKLVRNAFRDGDCWFNTGDVMSPQGMGHAAFVDRLGDTFRWKGENVATTQVEAALASDQTVEECTVYGVQIPRTGGRAGMAAITLRAGAEFDGQALARTVYGHLPGYALPLFVRVVGSLAHTTTFKSRKVELRNQAYGADIEDPLYVLAGPDEGYVPYYAEYPEEVSLGRRPQG.

The protein belongs to the ATP-dependent AMP-binding enzyme family.

The catalysed reaction is a medium-chain fatty acid + ATP + CoA = a medium-chain fatty acyl-CoA + AMP + diphosphate. It catalyses the reaction a long-chain fatty acid + ATP + CoA = a long-chain fatty acyl-CoA + AMP + diphosphate. The enzyme catalyses hexanoate + ATP + CoA = hexanoyl-CoA + AMP + diphosphate. It carries out the reaction octanoate + ATP + CoA = octanoyl-CoA + AMP + diphosphate. The catalysed reaction is decanoate + ATP + CoA = decanoyl-CoA + AMP + diphosphate. It catalyses the reaction dodecanoate + ATP + CoA = dodecanoyl-CoA + AMP + diphosphate. The enzyme catalyses tetradecanoate + ATP + CoA = tetradecanoyl-CoA + AMP + diphosphate. It carries out the reaction hexadecanoate + ATP + CoA = hexadecanoyl-CoA + AMP + diphosphate. The catalysed reaction is octadecanoate + ATP + CoA = octadecanoyl-CoA + AMP + diphosphate. It catalyses the reaction 9-decenoate + ATP + CoA = 9-decenoyl-CoA + AMP + diphosphate. The enzyme catalyses (9Z)-octadecenoate + ATP + CoA = (9Z)-octadecenoyl-CoA + AMP + diphosphate. It carries out the reaction 2-hydroxyhexadecanoate + ATP + CoA = 2-hydroxyhexadecanoyl-CoA + AMP + diphosphate. The catalysed reaction is 3-hydroxytetradecanoate + ATP + CoA = 3-hydroxytetradecanoyl-CoA + AMP + diphosphate. It catalyses the reaction 12-hydroxyoctadecanoate + ATP + CoA = 12-hydroxyoctadecanoyl-CoA + AMP + diphosphate. The enzyme catalyses 15-hydroxypentadecanoate + ATP + CoA = 15-hydroxypentadecanoyl-CoA + AMP + diphosphate. It carries out the reaction 16-hydroxyhexadecanoate + ATP + CoA = 16-hydroxyhexadecanoyl-CoA + AMP + diphosphate. The catalysed reaction is 2-methylhexadecanoate + ATP + CoA = 2-methylhexadecanoyl-CoA + AMP + diphosphate. It catalyses the reaction 3-methylundecanoate + ATP + CoA = 3-methylundecanoyl-CoA + AMP + diphosphate. The enzyme catalyses 12-methyltridecanoate + ATP + CoA = 12-methyltridecanoyl-CoA + AMP + diphosphate. It carries out the reaction 12-methyloctadecanoate + ATP + CoA = 12-methyloctadecanoyl-CoA + AMP + diphosphate. Catalyzes the activation of medium/long-chain fatty acids as acyl-coenzyme A (acyl-CoA). May play a role in the uptake of fatty acids by trapping them metabolically as CoA esters. May also play an important role in the channeling of fatty acids into triacylglycerol (TAG) for use by Mycobacterium during its dormancy. The sequence is that of Medium/long-chain-fatty-acid--CoA ligase FadD6 from Mycobacterium tuberculosis (strain ATCC 25618 / H37Rv).